A 54-amino-acid chain; its full sequence is Putative ATP synthase subunit epsilon, mitochondrial (54 aa).

The protein belongs to the eukaryotic ATPase epsilon family. In terms of assembly, F-type ATPases have 2 components, CF(1) - the catalytic core - and CF(0) - the membrane proton channel. CF(1) has five subunits: alpha(3), beta(3), gamma(1), delta(1), epsilon(1). CF(0) seems to have nine subunits: a, b, c, d, e, f, g, F6 and 8 (or A6L).

Its subcellular location is the mitochondrion. The protein localises to the mitochondrion inner membrane. Its function is as follows. Mitochondrial membrane ATP synthase (F(1)F(0) ATP synthase or Complex V) produces ATP from ADP in the presence of a proton gradient across the membrane which is generated by electron transport complexes of the respiratory chain. F-type ATPases consist of two structural domains, F(1) - containing the extramembraneous catalytic core, and F(0) - containing the membrane proton channel, linked together by a central stalk and a peripheral stalk. During catalysis, ATP synthesis in the catalytic domain of F(1) is coupled via a rotary mechanism of the central stalk subunits to proton translocation. Part of the complex F(1) domain and of the central stalk which is part of the complex rotary element. Rotation of the central stalk against the surrounding alpha(3)beta(3) subunits leads to hydrolysis of ATP in three separate catalytic sites on the beta subunits. This Caenorhabditis elegans protein is Putative ATP synthase subunit epsilon, mitochondrial.